A 623-amino-acid chain; its full sequence is Leucine-rich repeat, immunoglobulin-like domain and transmembrane domain-containing protein 1 (623 aa).

The N-terminal stretch at 1 to 21 (MRVALGMLWLLALAWPPQARG) is a signal peptide. In terms of domain architecture, LRRNT spans 22–59 (FCPSQCSCSLHIMGDGSKARTVVCNDPDMTLPPASIPP). The Lumenal portion of the chain corresponds to 22 to 526 (FCPSQCSCSL…EVVDAENTQQ (505 aa)). LRR repeat units lie at residues 60–81 (DTSRLRLERTAIRRVPGEAFRP), 84–105 (RLEQLWLPYNALSELNALMLRG), 108–129 (RLRELRLPGNRLAAFPWAALRD), 132–153 (KLRLLDLQANRLSAVPAEAARF), and 156–177 (NLTFLDLSSNQLMRLPQELIVS). N156 is a glycosylation site (N-linked (GlcNAc...) asparagine). Positions 201-253 (NPWACDCRLYDLVHLLDGWAPNLAFIETELRCASPRSLAGVAFSQLELRKCQG) constitute an LRRCT domain. The region spanning 266–335 (LLGGTALLRC…YICQAKNFLG (70 aa)) is the Ig-like C2-type domain. A disulfide bond links C275 and C328. Residues N296 and N455 are each glycosylated (N-linked (GlcNAc...) asparagine). In terms of domain architecture, Fibronectin type-III spans 430 to 518 (MVRSVKVVGD…QCVIFSTNEV (89 aa)). Residues 527–547 (LINVVVISVAIVIALPLTLLV) form a helical membrane-spanning segment. The Cytoplasmic portion of the chain corresponds to 548–623 (CCSALQKRCR…GGRRINEYFC (76 aa)). The stretch at 571–594 (YVNLERLGYSEDGLEELSRHSVSE) is one LRR 6 repeat.

In terms of assembly, may form a homodimer. Interacts with LRIT2; may form a heterodimer with LRIT2. Interacts (via its N-terminal extracellular domain) with metabotropic glutamate receptor GRM6. Interacts (via its extreme C-terminus) with the scaffold protein FRMPD2 (via the third PDZ domain); the interaction leads to their colocalization in photoreceptor synapses.

Its subcellular location is the endoplasmic reticulum membrane. It localises to the cell projection. The protein localises to the dendrite. Its function is as follows. Photoreceptor synaptic protein essential for normal vision. Involved in synapse formation in cone photoreceptor cells. In Homo sapiens (Human), this protein is Leucine-rich repeat, immunoglobulin-like domain and transmembrane domain-containing protein 1 (LRIT1).